The primary structure comprises 464 residues: MKVIQEKLPASQIGLEIEIPAETTKNTHEQVVKNLAKSVNIPGFRPGKVPRQILLQRLGTKAVKAAVIEELIENCLESALKQEGIESLGNPQLLSKFEDLIAAYEPGKALTFSVSLDVAPTIILGDYENLSVTAEETVYDPESVENWFKERQEQLATLVPVEDRGAQLGDVAIVDYRGKSAETGEDIPDIDGEDLRVDMEAGRFIEGMVEGIIGMKPEEVKEMTLTFPEDYPKEDVAAKAVIFTITMKELKAKELPELDDDFAQEVSDQETIAELRASLEKRFQEQAEKETKESIDDALTKELVKGATLDLPETLIEKEVTHILTQSFMQFQQMGLDVNQLFTKDNIPKMRENARPDAIESLKETLVVQELAKVAGIEVSPEAVAEKIANIMSQLSDRDIDMQRLEQVITEEMLAENTLEWLKEKATITLVPKGSLEEETSEEEETEETLAAAAVEVLAAEEEP.

A PPIase FKBP-type domain is found at 169 to 256 (GDVAIVDYRG…MKELKAKELP (88 aa)).

The protein belongs to the FKBP-type PPIase family. Tig subfamily.

It localises to the cytoplasm. It catalyses the reaction [protein]-peptidylproline (omega=180) = [protein]-peptidylproline (omega=0). In terms of biological role, involved in protein export. Acts as a chaperone by maintaining the newly synthesized protein in an open conformation. Functions as a peptidyl-prolyl cis-trans isomerase. This Microcystis aeruginosa (strain NIES-843 / IAM M-2473) protein is Trigger factor.